A 238-amino-acid chain; its full sequence is Pyridoxine 5'-phosphate synthase (238 aa).

Position 6 (N6) interacts with 3-amino-2-oxopropyl phosphate. 8 to 9 provides a ligand contact to 1-deoxy-D-xylulose 5-phosphate; sequence DH. R17 lines the 3-amino-2-oxopropyl phosphate pocket. Residue H42 is the Proton acceptor of the active site. 2 residues coordinate 1-deoxy-D-xylulose 5-phosphate: R44 and H49. E69 acts as the Proton acceptor in catalysis. T99 serves as a coordination point for 1-deoxy-D-xylulose 5-phosphate. Catalysis depends on H190, which acts as the Proton donor. 3-amino-2-oxopropyl phosphate is bound by residues G191 and 212-213; that span reads GH.

This sequence belongs to the PNP synthase family. As to quaternary structure, homooctamer; tetramer of dimers.

The protein localises to the cytoplasm. It carries out the reaction 3-amino-2-oxopropyl phosphate + 1-deoxy-D-xylulose 5-phosphate = pyridoxine 5'-phosphate + phosphate + 2 H2O + H(+). It participates in cofactor biosynthesis; pyridoxine 5'-phosphate biosynthesis; pyridoxine 5'-phosphate from D-erythrose 4-phosphate: step 5/5. Catalyzes the complicated ring closure reaction between the two acyclic compounds 1-deoxy-D-xylulose-5-phosphate (DXP) and 3-amino-2-oxopropyl phosphate (1-amino-acetone-3-phosphate or AAP) to form pyridoxine 5'-phosphate (PNP) and inorganic phosphate. The protein is Pyridoxine 5'-phosphate synthase of Chlorobium phaeobacteroides (strain BS1).